Consider the following 426-residue polypeptide: Glutamate-1-semialdehyde 2,1-aminomutase (426 aa).

Position 265 is an N6-(pyridoxal phosphate)lysine (lysine 265).

It belongs to the class-III pyridoxal-phosphate-dependent aminotransferase family. HemL subfamily. As to quaternary structure, homodimer. It depends on pyridoxal 5'-phosphate as a cofactor.

The protein resides in the cytoplasm. The enzyme catalyses (S)-4-amino-5-oxopentanoate = 5-aminolevulinate. It participates in porphyrin-containing compound metabolism; protoporphyrin-IX biosynthesis; 5-aminolevulinate from L-glutamyl-tRNA(Glu): step 2/2. This is Glutamate-1-semialdehyde 2,1-aminomutase from Salmonella paratyphi A (strain ATCC 9150 / SARB42).